Here is a 175-residue protein sequence, read N- to C-terminus: Disulfide bond formation protein B (175 aa).

Residues 1 to 13 (MTAFTRFAHSRAS) lie on the Cytoplasmic side of the membrane. Residues 14-30 (WFILTGSAIALEAAALY) form a helical membrane-spanning segment. The Periplasmic portion of the chain corresponds to 31–48 (FQYVMKLDPCVMCIYQRL). An intrachain disulfide couples Cys-40 to Cys-43. Residues 49–64 (AVFGILASGLIGMTAP) traverse the membrane as a helical segment. The Cytoplasmic segment spans residues 65–71 (KFLIVRI). Residues 72 to 89 (LGAIGWAVSATWGLKLAL) form a helical membrane-spanning segment. Residues 90–144 (ALVDMQNNPSPFSTCSFLPEFPAWMPLHEWFPSVMLPTGMCTDVPWQFMGVTMAE) lie on the Periplasmic side of the membrane. A disulfide bridge connects residues Cys-104 and Cys-130. The chain crosses the membrane as a helical span at residues 145-163 (WMVVAFSGYLVALLLFIVP). Over 164–175 (ILSGSNKPSLYK) the chain is Cytoplasmic.

The protein belongs to the DsbB family.

It localises to the cell inner membrane. Its function is as follows. Required for disulfide bond formation in some periplasmic proteins. Acts by oxidizing the DsbA protein. The sequence is that of Disulfide bond formation protein B from Shewanella sp. (strain ANA-3).